The primary structure comprises 620 residues: Estrogen receptor (620 aa).

Composition is skewed to polar residues over residues 1-10 and 101-111; these read MSKRQSSVQI and GSLQSLGSGPT. Disordered stretches follow at residues 1 to 55 and 88 to 111; these read MSKR…RGSG and YSAPLETNGPPSEGSLQSLGSGPT. The segment at 1–185 is modulating; that stretch reads MSKRQSSVQI…GFEMAKDTRF (185 aa). 2 consecutive NR C4-type zinc fingers follow at residues 186–206 and 222–246; these read CAVCSDYASGYHYGVWSCEGC and CPATNQCTIDRNRRKSCQACRLRKC. The segment at residues 186 to 251 is a DNA-binding region (nuclear receptor); sequence CAVCSDYASG…RLRKCYEVGM (66 aa). Residues 252–314 form a hinge region; that stretch reads MKGGVRKDRI…GGGRLSVTSI (63 aa). The segment at 286-308 is disordered; it reads KTVHYDGRKRSSTGGGGGGGGGR. Gly residues predominate over residues 298–308; the sequence is TGGGGGGGGGR. Residues 315–551 form the NR LBD domain; that stretch reads PPEQVLLLLQ…DLLLEMLDAH (237 aa). The tract at residues 558–620 is disordered; it reads RAPQSLSQVD…RPDCTPALQD (63 aa).

It belongs to the nuclear hormone receptor family. NR3 subfamily. In terms of assembly, binds DNA as a homodimer. Can form a heterodimer with ER-beta. As to expression, widely expressed in brain, ovary, testis, and female liver.

It is found in the nucleus. In terms of biological role, the steroid hormones and their receptors are involved in the regulation of eukaryotic gene expression and affect cellular proliferation and differentiation in target tissues. This Oryzias latipes (Japanese rice fish) protein is Estrogen receptor (esr1).